The following is a 334-amino-acid chain: Histo-blood group ABO system transferase 2 (334 aa).

At 1–15 the chain is on the cytoplasmic side; sequence MKDLRFGRLKCYSLH. The chain crosses the membrane as a helical; Signal-anchor for type II membrane protein span at residues 16–36; that stretch reads LGILPLTVLVLVFFCFVCLSL. Residues 37 to 334 are Lumenal-facing; it reads RSQEWGHPGA…VPKNHQAIRN (298 aa). The N-linked (GlcNAc...) asparagine glycan is linked to Asn-94. UDP-N-acetyl-alpha-D-galactosamine is bound by residues 102 to 104, Tyr-107, and 192 to 194; these read FAV and DVD. Asp-192 and Asp-194 together coordinate Mn(2+). Positions 214, 226, 284, and 307 each coordinate an alpha-L-fucosyl-(1-&gt;2)-beta-D-galactosyl derivative. Residue Glu-284 is the Nucleophile of the active site.

This sequence belongs to the glycosyltransferase 6 family. Requires Mn(2+) as cofactor. As to expression, large intestine, caecum, stomach, pancreas, submaxillary gland and kidney (at protein level). Ubiquitous.

The protein resides in the golgi apparatus. The protein localises to the golgi stack membrane. It localises to the secreted. The catalysed reaction is an alpha-L-fucosyl-(1-&gt;2)-beta-D-galactosyl derivative + UDP-N-acetyl-alpha-D-galactosamine = an N-acetyl-alpha-D-galactosaminyl-(1-&gt;3)-[alpha-L-fucosyl-(1-&gt;2)]-beta-D-galactosyl derivative + UDP + H(+). It catalyses the reaction an alpha-L-fucosyl-(1-&gt;2)-beta-D-galactosyl derivative + UDP-alpha-D-galactose = an alpha-D-galactosyl-(1-&gt;3)-[alpha-L-fucosyl-(1-&gt;2)]-beta-D-galactosyl derivative + UDP + H(+). It functions in the pathway protein modification; protein glycosylation. Functionally, possesses strong B transferase activity and weak A transferase activity. The chain is Histo-blood group ABO system transferase 2 (Abo2) from Rattus norvegicus (Rat).